A 387-amino-acid polypeptide reads, in one-letter code: DNA-damage-repair/toleration protein 111 (387 aa).

The tract at residues 1-213 (MLGGLYGDLP…TSGLGVGAGG (213 aa)) is disordered. Over residues 19–29 (SGNSSSVWSSS) the composition is skewed to low complexity. Basic and acidic residues predominate over residues 103 to 158 (DPARPNDYEEYKREKKRKATEAEMKREMDKRRQEDEERDKREREEREKERERDNSD). The G-patch domain maps to 214-260 (QMTAAQRMMAKMGWKQGQGLGKSEQGITTPLMAKKTDRRAGVIVNAS). The 87-residue stretch at 283–369 (RVLLLRNMVG…RTVRATFYDE (87 aa)) folds into the RRM domain.

As to quaternary structure, component of the SWAP1-SFPS-RRC1 splicing factor complex which modulates pre-mRNA splicing to promote photomorphogenesis. Interacts with SWAP1 in a light-independent manner. Associates with the photoreceptor phytochrome B (phyB) in nuclear photobodies upon response to red light. Binds to the splicing factor 1 SF1, involved in 3' splicing site recognition. As to expression, expressed ubiquitously with highest levels in dry seeds and in cells surrounding the base of trichomes and guard cells.

Its subcellular location is the nucleus. It localises to the nucleus speckle. As a member of the SWAP1-SFPS-RRC1 splicing factor complex, modulates photomorphogenesis by regulating the gene expression and pre-messenger RNA (mRNA) alternative splicing of a large number of genes, including those involved in plant responses to light signaling, probably by helping in the 3' splice site determination. Associates with and regulates EARLY FLOWERING 3 (ELF3) mRNA processing, a key component of the circadian clock also involved in photomorphogenesis. Required for light-regulated (red, far-red and blue lights) photomorphogenesis in a PHYB- and PHYTOCHROME INTERACTING FACTORS- (PIFs) dependent manner. Promotes flowering under both short (SD) and long days (LD). Controls abscisic acid (ABA) sensitivity during seed development, stomatal responsiveness and germination by monitoring ABI3 splicing, upstream of the splicing factor SUPPRESSOR OF ABI3-ABI5. Seems to be involved in the resistance to UV light and chemical DNA-damaging agents. This is DNA-damage-repair/toleration protein 111 from Arabidopsis thaliana (Mouse-ear cress).